Here is a 691-residue protein sequence, read N- to C-terminus: Elongation factor G (691 aa).

Positions 8 to 283 (EDYRNFGIMA…AVVDYLPSPI (276 aa)) constitute a tr-type G domain. GTP contacts are provided by residues 17–24 (AHIDAGKT), 81–85 (DTPGH), and 135–138 (NKMD).

It belongs to the TRAFAC class translation factor GTPase superfamily. Classic translation factor GTPase family. EF-G/EF-2 subfamily.

It is found in the cytoplasm. Functionally, catalyzes the GTP-dependent ribosomal translocation step during translation elongation. During this step, the ribosome changes from the pre-translocational (PRE) to the post-translocational (POST) state as the newly formed A-site-bound peptidyl-tRNA and P-site-bound deacylated tRNA move to the P and E sites, respectively. Catalyzes the coordinated movement of the two tRNA molecules, the mRNA and conformational changes in the ribosome. In Methylocella silvestris (strain DSM 15510 / CIP 108128 / LMG 27833 / NCIMB 13906 / BL2), this protein is Elongation factor G.